A 695-amino-acid chain; its full sequence is RING finger protein 145 (695 aa).

13 helical membrane passes run 53–73, 77–97, 123–143, 146–166, 168–188, 225–245, 275–295, 316–336, 340–360, 384–404, 410–430, 460–480, and 482–502; these read YLAL…LTLP, LAKL…HQIS, FITA…VMKT, IWLF…VPIE, IVVI…YFLA, LVVP…QIYT, YSLL…LTLC, TEGV…LQVV, FLLS…MLEI, SLCL…CQFF, LLII…TLFI, LLEF…TVFG, and WTVM…WLRA. An RING-type; atypical zinc finger spans residues 537–575; the sequence is CSICYQDMNSAVITPCSHFFHPGCLKKWLYVQETCPLCH. The span at 585–603 shows a compositional bias: polar residues; the sequence is ATGESGSSTNPVSEQSATN. The disordered stretch occupies residues 585–610; that stretch reads ATGESGSSTNPVSEQSATNPPLGPVS.

The protein localises to the membrane. In Xenopus tropicalis (Western clawed frog), this protein is RING finger protein 145 (rnf145).